Consider the following 303-residue polypeptide: tRNA dimethylallyltransferase (303 aa).

Residue 10-17 (GPTASGKS) participates in ATP binding. 12–17 (TASGKS) lines the substrate pocket. Residues 35-38 (DSMQ) are interaction with substrate tRNA.

It belongs to the IPP transferase family. As to quaternary structure, monomer. It depends on Mg(2+) as a cofactor.

It catalyses the reaction adenosine(37) in tRNA + dimethylallyl diphosphate = N(6)-dimethylallyladenosine(37) in tRNA + diphosphate. Functionally, catalyzes the transfer of a dimethylallyl group onto the adenine at position 37 in tRNAs that read codons beginning with uridine, leading to the formation of N6-(dimethylallyl)adenosine (i(6)A). This Methylobacterium nodulans (strain LMG 21967 / CNCM I-2342 / ORS 2060) protein is tRNA dimethylallyltransferase.